The following is a 308-amino-acid chain: GTP cyclohydrolase FolE2 (308 aa).

It belongs to the GTP cyclohydrolase IV family.

It carries out the reaction GTP + H2O = 7,8-dihydroneopterin 3'-triphosphate + formate + H(+). It functions in the pathway cofactor biosynthesis; 7,8-dihydroneopterin triphosphate biosynthesis; 7,8-dihydroneopterin triphosphate from GTP: step 1/1. Functionally, converts GTP to 7,8-dihydroneopterin triphosphate. This Colwellia psychrerythraea (strain 34H / ATCC BAA-681) (Vibrio psychroerythus) protein is GTP cyclohydrolase FolE2.